Here is a 249-residue protein sequence, read N- to C-terminus: Cyclin-dependent kinase inhibitor 2 (249 aa).

The disordered stretch occupies residues 118–180 (KVCTQAGEDH…MCRRSSTTSA (63 aa)). The segment covering 161–180 (AESNQEAKQQMCRRSSTTSA) has biased composition (polar residues).

This sequence belongs to the CDI family. ICK/KRP subfamily.

This Oryza sativa subsp. japonica (Rice) protein is Cyclin-dependent kinase inhibitor 2 (KRP2).